A 356-amino-acid polypeptide reads, in one-letter code: Alanine racemase, catabolic (356 aa).

The active-site Proton acceptor; specific for D-alanine is Lys-35. At Lys-35 the chain carries N6-(pyridoxal phosphate)lysine. Residue Arg-130 coordinates substrate. Tyr-253 serves as the catalytic Proton acceptor; specific for L-alanine. Met-301 is a substrate binding site.

Belongs to the alanine racemase family. Pyridoxal 5'-phosphate is required as a cofactor.

The enzyme catalyses L-alanine = D-alanine. Functionally, isomerizes L-alanine to D-alanine which is then oxidized to pyruvate by DadA. This Escherichia coli O6:H1 (strain CFT073 / ATCC 700928 / UPEC) protein is Alanine racemase, catabolic (dadX).